The primary structure comprises 190 residues: Hypoxanthine/guanine phosphoribosyltransferase (190 aa).

The protein belongs to the purine/pyrimidine phosphoribosyltransferase family. Archaeal HPRT subfamily. As to quaternary structure, homodimer.

It localises to the cytoplasm. It carries out the reaction IMP + diphosphate = hypoxanthine + 5-phospho-alpha-D-ribose 1-diphosphate. The enzyme catalyses GMP + diphosphate = guanine + 5-phospho-alpha-D-ribose 1-diphosphate. It functions in the pathway purine metabolism; IMP biosynthesis via salvage pathway; IMP from hypoxanthine: step 1/1. Catalyzes a salvage reaction resulting in the formation of IMP that is energically less costly than de novo synthesis. The polypeptide is Hypoxanthine/guanine phosphoribosyltransferase (Methanosalsum zhilinae (strain DSM 4017 / NBRC 107636 / OCM 62 / WeN5) (Methanohalophilus zhilinae)).